The chain runs to 138 residues: Sec-independent protein translocase protein TatB (138 aa).

A helical membrane pass occupies residues 1–21 (MFDIGFSELLLIAVVALVVLG). The interval 116–138 (VHHVHVPPPSTSTHGNNGQEKSQ) is disordered. The span at 126–138 (TSTHGNNGQEKSQ) shows a compositional bias: polar residues.

Belongs to the TatB family. In terms of assembly, the Tat system comprises two distinct complexes: a TatABC complex, containing multiple copies of TatA, TatB and TatC subunits, and a separate TatA complex, containing only TatA subunits. Substrates initially bind to the TatABC complex, which probably triggers association of the separate TatA complex to form the active translocon.

Its subcellular location is the cell inner membrane. Its function is as follows. Part of the twin-arginine translocation (Tat) system that transports large folded proteins containing a characteristic twin-arginine motif in their signal peptide across membranes. Together with TatC, TatB is part of a receptor directly interacting with Tat signal peptides. TatB may form an oligomeric binding site that transiently accommodates folded Tat precursor proteins before their translocation. This chain is Sec-independent protein translocase protein TatB, found in Xylella fastidiosa (strain Temecula1 / ATCC 700964).